A 216-amino-acid polypeptide reads, in one-letter code: ATP-dependent Clp protease proteolytic subunit (216 aa).

The Nucleophile role is filled by Ser101. His126 is a catalytic residue.

It belongs to the peptidase S14 family. Component of the chloroplastic Clp protease core complex.

The protein localises to the plastid. It is found in the chloroplast stroma. It catalyses the reaction Hydrolysis of proteins to small peptides in the presence of ATP and magnesium. alpha-casein is the usual test substrate. In the absence of ATP, only oligopeptides shorter than five residues are hydrolyzed (such as succinyl-Leu-Tyr-|-NHMec, and Leu-Tyr-Leu-|-Tyr-Trp, in which cleavage of the -Tyr-|-Leu- and -Tyr-|-Trp bonds also occurs).. Functionally, cleaves peptides in various proteins in a process that requires ATP hydrolysis. Has a chymotrypsin-like activity. Plays a major role in the degradation of misfolded proteins. The protein is ATP-dependent Clp protease proteolytic subunit of Zea mays (Maize).